A 124-amino-acid polypeptide reads, in one-letter code: Fluoride-specific ion channel FluC (124 aa).

Transmembrane regions (helical) follow at residues 3-23, 34-54, 68-88, and 100-120; these read VLLIFLGCGAGGVARYGVSNL, IGTLIVNITGSLLMGILFIFI, LLLIGFLGGYTTFSSFSIETF, and ALNVLLSVALCIAGAWLGVLI. The Na(+) site is built by Gly-75 and Thr-78.

The protein belongs to the fluoride channel Fluc/FEX (TC 1.A.43) family.

The protein resides in the cell inner membrane. The enzyme catalyses fluoride(in) = fluoride(out). Na(+) is not transported, but it plays an essential structural role and its presence is essential for fluoride channel function. Fluoride-specific ion channel. Important for reducing fluoride concentration in the cell, thus reducing its toxicity. The protein is Fluoride-specific ion channel FluC of Coxiella burnetii (strain Dugway 5J108-111).